Reading from the N-terminus, the 255-residue chain is Flap endonuclease Xni (255 aa).

Residue aspartate 105 participates in Mg(2+) binding. Residues 162–254 (EHKQFIDYLA…LKQFRLPKAN (93 aa)) form the 5'-3' exonuclease domain. K(+)-binding residues include leucine 172, alanine 173, proline 181, valine 183, and isoleucine 186. The tract at residues 185-190 (GIGPKS) is interaction with DNA.

It belongs to the Xni family. Mg(2+) serves as cofactor. K(+) is required as a cofactor.

In terms of biological role, has flap endonuclease activity. During DNA replication, flap endonucleases cleave the 5'-overhanging flap structure that is generated by displacement synthesis when DNA polymerase encounters the 5'-end of a downstream Okazaki fragment. The protein is Flap endonuclease Xni of Shewanella piezotolerans (strain WP3 / JCM 13877).